The sequence spans 759 residues: Catalase-peroxidase (759 aa).

Residues 1-24 form a disordered region; it reads MTQDKCPFKEQSSQPNFAGGGTSN. Residues 96–242 constitute a cross-link (tryptophyl-tyrosyl-methioninium (Trp-Tyr) (with M-268)); the sequence is WHSAGTYRVF…LAAAHMGLIY (147 aa). The Proton acceptor role is filled by histidine 97. Positions 242-268 form a cross-link, tryptophyl-tyrosyl-methioninium (Tyr-Met) (with W-96); that stretch reads YVNPEGPDGNPDPVAAAHDIRDTFGRM. Histidine 283 contributes to the heme b binding site.

It belongs to the peroxidase family. Peroxidase/catalase subfamily. In terms of assembly, homodimer or homotetramer. Requires heme b as cofactor. Formation of the three residue Trp-Tyr-Met cross-link is important for the catalase, but not the peroxidase activity of the enzyme.

It localises to the cytoplasm. It catalyses the reaction H2O2 + AH2 = A + 2 H2O. The catalysed reaction is 2 H2O2 = O2 + 2 H2O. In terms of biological role, bifunctional enzyme with both catalase and broad-spectrum peroxidase activity. The polypeptide is Catalase-peroxidase (Aspergillus fumigatus (strain CBS 144.89 / FGSC A1163 / CEA10) (Neosartorya fumigata)).